Reading from the N-terminus, the 128-residue chain is UPF0325 protein YaeH (128 aa).

This sequence belongs to the UPF0325 family.

This is UPF0325 protein YaeH from Escherichia coli (strain ATCC 8739 / DSM 1576 / NBRC 3972 / NCIMB 8545 / WDCM 00012 / Crooks).